The primary structure comprises 239 residues: MSKAQTLSAADRAKLEGLIGHDFAEKERLDRALTHASARTEKGGNYERLEFLGDRVLGLCIAELLFRTFGTAGEGELSVRLNQLVSAETCAAVADELNLHLYIRTGADVKKLTGKRMMNVRADVVESLIAAIYLDGGLEVARRFILRYWQGRAVRADGAKRDAKTELQEWSHAKFGVTPIYRVDERSGPDHDPRFKVTVEVAGIKPETGVERSKRAAEQVAATKMLEREGIWQQSPAGN.

The RNase III domain maps to 12–137 (RAKLEGLIGH…LIAAIYLDGG (126 aa)). Position 50 (Glu50) interacts with Mg(2+). The active site involves Asp54. Mg(2+) is bound by residues Asp123 and Glu126. Glu126 is an active-site residue. Positions 162–231 (DAKTELQEWS…ATKMLEREGI (70 aa)) constitute a DRBM domain.

Belongs to the ribonuclease III family. As to quaternary structure, homodimer. The cofactor is Mg(2+).

The protein resides in the cytoplasm. It carries out the reaction Endonucleolytic cleavage to 5'-phosphomonoester.. In terms of biological role, digests double-stranded RNA. Involved in the processing of primary rRNA transcript to yield the immediate precursors to the large and small rRNAs (23S and 16S). Processes some mRNAs, and tRNAs when they are encoded in the rRNA operon. Processes pre-crRNA and tracrRNA of type II CRISPR loci if present in the organism. This chain is Ribonuclease 3, found in Rhizobium johnstonii (strain DSM 114642 / LMG 32736 / 3841) (Rhizobium leguminosarum bv. viciae).